The sequence spans 160 residues: uncharacterized protein (160 aa).

Positions 69–145 form a coiled coil; sequence NQLLNMMAQA…EQREHVKEQR (77 aa). Disordered regions lie at residues 82–109 and 129–160; these read GVRL…LKNA and KKKQ…HRGK. Over residues 86-99 the composition is skewed to basic residues; sequence QGRRQKKINPKRLQ. A compositionally biased stretch (basic and acidic residues) spans 133–146; it reads IMKEQREHVKEQRY. Residues 147–160 are compositionally biased toward basic residues; that stretch reads MLKKQKAKKKHRGK.

This is an uncharacterized protein from Bacillus subtilis (strain 168).